A 1072-amino-acid chain; its full sequence is DNA-directed RNA polymerase subunit beta (1072 aa).

Belongs to the RNA polymerase beta chain family. In plastids the minimal PEP RNA polymerase catalytic core is composed of four subunits: alpha, beta, beta', and beta''. When a (nuclear-encoded) sigma factor is associated with the core the holoenzyme is formed, which can initiate transcription.

The protein localises to the plastid. It is found in the chloroplast. The enzyme catalyses RNA(n) + a ribonucleoside 5'-triphosphate = RNA(n+1) + diphosphate. In terms of biological role, DNA-dependent RNA polymerase catalyzes the transcription of DNA into RNA using the four ribonucleoside triphosphates as substrates. In Amborella trichopoda, this protein is DNA-directed RNA polymerase subunit beta.